We begin with the raw amino-acid sequence, 163 residues long: Carbon monoxide dehydrogenase small chain (163 aa).

Residues 4-80 (KIITVNVNGK…GSEVLTVEGL (77 aa)) form the 2Fe-2S ferredoxin-type domain. [2Fe-2S] cluster contacts are provided by Cys42, Cys47, Cys50, Cys62, Cys101, Cys104, Cys136, and Cys138.

As to quaternary structure, dimer of heterotrimers. Each heterotrimer consists of a large, a medium and a small subunit. [2Fe-2S] cluster serves as cofactor.

It carries out the reaction CO + a quinone + H2O = a quinol + CO2. Functionally, catalyzes the oxidation of carbon monoxide to carbon dioxide. This Hydrogenophaga pseudoflava (Pseudomonas carboxydoflava) protein is Carbon monoxide dehydrogenase small chain (cutS).